Here is a 1423-residue protein sequence, read N- to C-terminus: uncharacterized protein (1423 aa).

The first 28 residues, 1-28, serve as a signal peptide directing secretion; the sequence is MTSSVRLAFLATLLLLLPLEAQIQQANS. Residues 29–1321 lie on the Extracellular side of the membrane; that stretch reads ANVNQNVGQQ…RSREKQNFLT (1293 aa). Asn-94, Asn-306, Asn-355, Asn-483, Asn-666, and Asn-903 each carry an N-linked (GlcNAc...) asparagine glycan. Positions 184–347 constitute an NIDO domain; that stretch reads SFFGQSASKA…GRYMFRVDDV (164 aa). The region spanning 638–818 is the AMOP domain; it reads VKKKSLEMCH…FRCQMFYWRR (181 aa). A helical transmembrane segment spans residues 1322–1342; sequence WLAIIGGIFGVLVFVILIFLC. Topologically, residues 1343-1423 are cytoplasmic; that stretch reads CWIVKQKKKG…EDLHGLKTSV (81 aa). The disordered stretch occupies residues 1364 to 1401; sequence SRSSMTGSRGGKKYPIHESEPLNEKRFDADTYRDDDFY. Residues 1378–1401 show a composition bias toward basic and acidic residues; sequence PIHESEPLNEKRFDADTYRDDDFY.

It is found in the membrane. This is an uncharacterized protein from Caenorhabditis elegans.